Here is a 701-residue protein sequence, read N- to C-terminus: DNA ligase (701 aa).

NAD(+) contacts are provided by residues 43 to 47, 92 to 93, and glutamate 126; these read DAAYD and SL. Lysine 128 functions as the N6-AMP-lysine intermediate in the catalytic mechanism. Positions 149, 186, 302, and 326 each coordinate NAD(+). Residues cysteine 420, cysteine 423, cysteine 444, and cysteine 450 each coordinate Zn(2+). In terms of domain architecture, BRCT spans 623–701; that stretch reads ANDSPVAGKT…EDEWFDLIGA (79 aa).

The protein belongs to the NAD-dependent DNA ligase family. LigA subfamily. The cofactor is Mg(2+). Mn(2+) serves as cofactor.

It carries out the reaction NAD(+) + (deoxyribonucleotide)n-3'-hydroxyl + 5'-phospho-(deoxyribonucleotide)m = (deoxyribonucleotide)n+m + AMP + beta-nicotinamide D-nucleotide.. In terms of biological role, DNA ligase that catalyzes the formation of phosphodiester linkages between 5'-phosphoryl and 3'-hydroxyl groups in double-stranded DNA using NAD as a coenzyme and as the energy source for the reaction. It is essential for DNA replication and repair of damaged DNA. The polypeptide is DNA ligase (Maricaulis maris (strain MCS10) (Caulobacter maris)).